A 312-amino-acid polypeptide reads, in one-letter code: Taste receptor type 2 member 7 (312 aa).

At 1–9 (MTYETDTTL) the chain is on the extracellular side. The chain crosses the membrane as a helical span at residues 10–30 (MLVAVGEALVGILGNAFIALV). The Cytoplasmic portion of the chain corresponds to 31 to 49 (NFMGWMKNRKIASIDLILS). A helical membrane pass occupies residues 50–70 (SVAMSRICLQCIILLDCIILV). At 71-101 (QYPDTYNRGKEMRTVDFFWTLTNHLSVWFAT) the chain is on the extracellular side. Residues 102–122 (CLSIFYLFKIANFFHPLFLWI) traverse the membrane as a helical segment. Over 123–128 (KWRIDK) the chain is Cytoplasmic. A helical membrane pass occupies residues 129–149 (LILRTLLACVIISLCFSLPVT). Residues 150-187 (ENLSDDFRRCVKTKERINSTLRCKVNKAGHASVKVNLN) lie on the Extracellular side of the membrane. N151 and N167 each carry an N-linked (GlcNAc...) asparagine glycan. Residues 188–208 (LVMLFPFSVSLVSFLLLILSL) traverse the membrane as a helical segment. The Cytoplasmic segment spans residues 209–235 (WRHTRQIQLSVTGYKDPSTTAHVKAMK). A helical membrane pass occupies residues 236-256 (AVISFLALFVVYCLAFLIATS). The Extracellular segment spans residues 257–266 (SYFMPESELA). The chain crosses the membrane as a helical span at residues 267–287 (VIWGELIALIYPSSHSFILIL). Over 288-312 (GSSKLKQASVRVLCRVKTMLKGKKY) the chain is Cytoplasmic.

The protein belongs to the G-protein coupled receptor T2R family. Expressed in subsets of taste receptor cells of the tongue and palate epithelium and exclusively in gustducin-positive cells. Expressed in 15% taste bud cells in circumvallate and foliate papillae but only in 2% in fungiform papillae. Expressed in gastric and duodenal tissues.

It is found in the membrane. Its function is as follows. Gustducin-coupled receptor implicated in the perception of bitter compounds in the oral cavity and the gastrointestinal tract. Signals through PLCB2 and the calcium-regulated cation channel TRPM5. The protein is Taste receptor type 2 member 7 (Tas2r7) of Mus musculus (Mouse).